The primary structure comprises 304 residues: N-acetyllactosaminide alpha-2,3-sialyltransferase (304 aa).

CMP-N-acetyl-beta-neuraminate-binding positions include 221-225, 242-243, and 262-263; these read FPHPA, FE, and SS. H223 serves as the catalytic Proton donor.

The protein belongs to the glycosyltransferase 52 family.

It carries out the reaction a beta-D-galactosyl-(1-&gt;4)-N-acetyl-beta-D-glucosaminyl derivative + CMP-N-acetyl-beta-neuraminate = an N-acetyl-alpha-neuraminyl-(2-&gt;3)-beta-D-galactosyl-(1-&gt;4)-N-acetyl-beta-D-glucosaminyl derivative + CMP + H(+). The protein operates within bacterial outer membrane biogenesis; lipooligosaccharide biosynthesis. Catalyzes the transfer of sialic acid from the substrate CMP-N-acetylneuraminate to the terminal galactose residue of the N-acetyllactosamine moiety of surface lipooligosaccharide (LOS). Thus, functions in the sialylation of LOS, which plays a role in the evasion of the host immune response. This is N-acetyllactosaminide alpha-2,3-sialyltransferase from Haemophilus influenzae (strain ATCC 51907 / DSM 11121 / KW20 / Rd).